The following is a 560-amino-acid chain: MSTERTSWTNLSTIQKIALGLGIPASATVAYILYRRYRESREERLTFVGEDDIEIEMRVPQEAVKLIIGRQGANIKQLRKQTGARIDVDTEDVGDERVLLISGFPVQVCKAKAAIHQILTENTPVFEQLSVPQRSVGRIIGRGGETIRSICKASGAKITCDKESEGTLLLSRLIKISGTQKEVAAAKHLILEKVSEDEELRKRIAHSAETRVPRKQPISVRREEVTEPGGAGEAALWKNTNSSMGPATPLEVPLRKGGGDMVVVGPKEGSWEKPNDDSFQNSGAQSSPETSMFEIPSPDFSFHADEYLEVYVSASEHPNHFWIQIIGSRSLQLDKLVSEMTQHYENSLPEDLTVHVGDIVAAPLSTNGSWYRARVLGTLENGNLDLYFVDFGDNGDCALKDLRALRSDFLSLPFQAIECSLARIAPTGEEWEEEALDEFDRLTHCADWKPLVAKISSYVQTGISTWPKIYLYDTSDEKKLDIGLELVRKGYAVELPEDMEENRTVPNMLKDMATETDDSLASILTETKKSPEEMPHTLSCLSLSEAASMSGDDNLEDDLF.

2 KH domains span residues 52–115 (DIEI…KAAI) and 124–190 (PVFE…KHLI). Glycyl lysine isopeptide (Lys-Gly) (interchain with G-Cter in ubiquitin) cross-links involve residues K65, K76, K110, K112, K152, K175, K181, K187, and K193. Positions 211 to 230 (RVPRKQPISVRREEVTEPGG) are disordered. Glycyl lysine isopeptide (Lys-Gly) (interchain with G-Cter in ubiquitin) cross-links involve residues K256 and K267. The interval 268–291 (EGSWEKPNDDSFQNSGAQSSPETS) is disordered. The segment covering 277–290 (DSFQNSGAQSSPET) has biased composition (polar residues). Phosphoserine is present on S278. One can recognise a Tudor domain in the interval 353–412 (TVHVGDIVAAPLSTNGSWYRARVLGTLENGNLDLYFVDFGDNGDCALKDLRALRSDFLSL). Glycyl lysine isopeptide (Lys-Gly) (interchain with G-Cter in ubiquitin) cross-links involve residues K479, K510, and K529.

It belongs to the Tdrkh family. In terms of assembly, interacts with (symmetrically methylated) PIWIL1, PIWIL2 and PIWIL4. Ubiquitinated by PRKN during mitophagy, leading to its degradation and enhancement of mitophagy. Deubiquitinated by USP30. Highly expressed in testis, present at lower level in brain. Weakly or not expressed in other tissues (at protein level).

The protein localises to the cytoplasm. It is found in the mitochondrion. Its function is as follows. Participates in the primary piRNA biogenesis pathway and is required during spermatogenesis to repress transposable elements and prevent their mobilization, which is essential for the germline integrity. The piRNA metabolic process mediates the repression of transposable elements during meiosis by forming complexes composed of piRNAs and Piwi proteins and govern the methylation and subsequent repression of transposons. Required for the final steps of primary piRNA biogenesis by participating in the processing of 31-37 nt intermediates into mature piRNAs. May act in pi-bodies and piP-bodies by transferring piRNA precursors or intermediates to or between these granules. This is Tudor and KH domain-containing protein (Tdrkh) from Mus musculus (Mouse).